A 397-amino-acid chain; its full sequence is L-asparaginase-like protein GD25160 (397 aa).

A signal peptide spans 1 to 22 (MLAQSCCLRLLILLLLFTSICS). 3 disulfides stabilise this stretch: Cys90/Cys95, Cys189/Cys205, and Cys344/Cys371.

This sequence belongs to the Ntn-hydrolase family.

The sequence is that of L-asparaginase-like protein GD25160 from Drosophila simulans (Fruit fly).